The sequence spans 26 residues: Melittin (26 aa).

Glycine 1 is modified (N-formylglycine; partial). Glutamate 26 carries the post-translational modification Glutamic acid 1-amide.

It belongs to the melittin family. In terms of assembly, monomer (in solution and for integration into membranes), homotetramer (in solution and potentially as a toroidal pore in membranes), and potenially homomultimer (as a toroidal pore in membranes). Expressed by the venom gland.

It is found in the secreted. The protein localises to the target cell membrane. Its function is as follows. Main toxin of bee venom with strong hemolytic activity and antimicrobial activity. It has enhancing effects on bee venom phospholipase A2 activity. This amphipathic toxin binds to negatively charged membrane surface and forms pore by inserting into lipid bilayers inducing the leakage of ions and molecules and the enhancement of permeability that ultimately leads to cell lysis. It acts as a voltage-gated pore with higher selectivity for anions over cations. The ion conductance has been shown to be voltage-dependent. Self-association of melittin in membranes is promoted by high ionic strength, but not by the presence of negatively charged lipids. In vivo, intradermal injection into healthy human volunteers produce sharp pain sensation and an inflammatory response. It produces pain by activating primary nociceptor cells directly and indirectly due to its ability to activate plasma membrane phospholipase A2 and its pore-forming activity. This is Melittin (MELT) from Apis dorsata (Giant honeybee).